We begin with the raw amino-acid sequence, 264 residues long: Phosphonoacetaldehyde hydrolase (264 aa).

The Nucleophile role is filled by aspartate 9. Aspartate 9 and alanine 11 together coordinate Mg(2+). Lysine 50 serves as the catalytic Schiff-base intermediate with substrate. Mg(2+) is bound at residue aspartate 183.

Belongs to the HAD-like hydrolase superfamily. PhnX family. In terms of assembly, homodimer. It depends on Mg(2+) as a cofactor.

It carries out the reaction phosphonoacetaldehyde + H2O = acetaldehyde + phosphate + H(+). In terms of biological role, involved in phosphonate degradation. This chain is Phosphonoacetaldehyde hydrolase, found in Bacillus cereus (strain B4264).